The primary structure comprises 284 residues: L-ribulose-5-phosphate 3-epimerase UlaE (284 aa).

This sequence belongs to the L-ribulose-5-phosphate 3-epimerase family.

It catalyses the reaction L-ribulose 5-phosphate = L-xylulose 5-phosphate. It functions in the pathway cofactor degradation; L-ascorbate degradation; D-xylulose 5-phosphate from L-ascorbate: step 3/4. In terms of biological role, catalyzes the isomerization of L-xylulose-5-phosphate to L-ribulose-5-phosphate. Is involved in the anaerobic L-ascorbate utilization. This chain is L-ribulose-5-phosphate 3-epimerase UlaE, found in Escherichia coli O45:K1 (strain S88 / ExPEC).